A 64-amino-acid chain; its full sequence is Large ribosomal subunit protein bL32 (64 aa).

The disordered stretch occupies residues 1–35; sequence MAVQKSRVTPSRRGMRRAHDALSAKQLSTDPTTGE.

The protein belongs to the bacterial ribosomal protein bL32 family.

The sequence is that of Large ribosomal subunit protein bL32 from Stenotrophomonas maltophilia (strain R551-3).